Consider the following 362-residue polypeptide: Probable S-adenosylmethionine-dependent methyltransferase At5g37970 (362 aa).

Positions 19, 66, 71, 107, 136, and 137 each coordinate S-adenosyl-L-homocysteine. 3 residues coordinate Mg(2+): Asn175, Glu261, and Phe263.

The protein belongs to the methyltransferase superfamily. Type-7 methyltransferase family. Homodimer. It depends on Mg(2+) as a cofactor.

The polypeptide is Probable S-adenosylmethionine-dependent methyltransferase At5g37970 (Arabidopsis thaliana (Mouse-ear cress)).